The chain runs to 700 residues: Beta-galactosidase BgaB (700 aa).

Positions 122 and 160 each coordinate substrate. Catalysis depends on E161, which acts as the Proton donor. Residue E320 is the Nucleophile of the active site. Residues W328 and 368–371 each bind substrate; that span reads EAFH.

Belongs to the glycosyl hydrolase 42 family. Trimer. Tetramer. Post-translationally, the N-terminus is blocked.

The enzyme catalyses Hydrolysis of terminal non-reducing beta-D-galactose residues in beta-D-galactosides.. Inhibited by high substrate concentrations (100 mg/ml). No effect on activity with various EDTA concentrations (0-1 mM). 20-fold higher activity when cells grown on TOS than when cells grown on galactose, glucose and lactose. In terms of biological role, involved in the hydrolysis of transgalactooligosaccharides (TOS). Highly active towards Gal(beta1-4)Gal and Gal(beta1-4)-Gal-containing oligosaccharides. Low activity towards Gal(beta1-3)Gal, lactose and Gal(beta1-3)GalOMe. No activity towards Gal(beta1-6)Gal, Gal(beta1-4)Man, Gal(alpha1-4)Gal, Gal(alpha1-3)Gal(beta1-4)Gal, lactulose, 3'fucosyllactose, lacto-N-fucopentaose I, lacto-N-fucopentaose II, cellobiose, maltose or sucrose. No transglycosylation activity is found at high substrate concentrations (100 mg/ml) and only low transglycosylation activity at lower substrate concentrations (10 mg/ml). The sequence is that of Beta-galactosidase BgaB (bgaB) from Bifidobacterium adolescentis (strain ATCC 15703 / DSM 20083 / NCTC 11814 / E194a).